A 429-amino-acid chain; its full sequence is Enolase (429 aa).

(2R)-2-phosphoglycerate is bound at residue Q168. Residue E210 is the Proton donor of the active site. Mg(2+) contacts are provided by D247, E288, and D315. (2R)-2-phosphoglycerate is bound by residues K340, R369, S370, and K391. K340 serves as the catalytic Proton acceptor.

This sequence belongs to the enolase family. It depends on Mg(2+) as a cofactor.

Its subcellular location is the cytoplasm. It localises to the secreted. The protein localises to the cell surface. The enzyme catalyses (2R)-2-phosphoglycerate = phosphoenolpyruvate + H2O. The protein operates within carbohydrate degradation; glycolysis; pyruvate from D-glyceraldehyde 3-phosphate: step 4/5. Its function is as follows. Catalyzes the reversible conversion of 2-phosphoglycerate (2-PG) into phosphoenolpyruvate (PEP). It is essential for the degradation of carbohydrates via glycolysis. The sequence is that of Enolase from Trichormus variabilis (strain ATCC 29413 / PCC 7937) (Anabaena variabilis).